Reading from the N-terminus, the 528-residue chain is Sodium-dependent lysophosphatidylcholine symporter 1 (528 aa).

Over 1–37 (MAGGGGAERVRVGAAAAGLLPPSCRQPRRRESRERLS) the chain is Cytoplasmic. The chain crosses the membrane as a helical span at residues 38–66 (VCSKLCYAVGGAPYQTTGCALGFFLQIYL). At 67-73 (LDVAQLD) the chain is on the extracellular side. Residues 74–99 (PFYASIILFVGRAWDAITDPMVGFFI) form a helical membrane-spanning segment. At 100–109 (SKTPWTRFGR) the chain is on the cytoplasmic side. Residues 110–129 (LMPWIIFSTPFAVISYFLIW) form a helical membrane-spanning segment. Residues 130–138 (FVPDISTGQ) are Extracellular-facing. The chain crosses the membrane as a helical span at residues 139–161 (VMWYLIFYCIFQTLVTCFHVPYS). Over 162-176 (ALTMFISREQSERDS) the chain is Cytoplasmic. A helical transmembrane segment spans residues 177 to 199 (ATAYRMTVEVLGTVLGTAIQGQI). Over 200–241 (VGKAVTPCIENPPFLSETNFSVAIRNVNMTHYTGSLADTRNA) the chain is Extracellular. A disulfide bridge links Cys207 with Cys460. N-linked (GlcNAc...) asparagine glycosylation is found at Asn218 and Asn227. Residues 242–263 (YMVAAGVIGGLYILCAVILSVG) form a helical membrane-spanning segment. Residues 264-295 (VREKRESSELQSDEPVSFFRGLKLVMNHGAYI) lie on the Cytoplasmic side of the membrane. Residues 296-319 (KLITGFLFTSLAFMLLEGNFALFC) traverse the membrane as a helical segment. Residues 320–328 (TYTLGFRNE) lie on the Extracellular side of the membrane. A helical membrane pass occupies residues 329-351 (FQNILLAIMLSATLTIPFWQWFL). Over 352 to 355 (TRFG) the chain is Cytoplasmic. A helical membrane pass occupies residues 356–376 (KKTAVYVGISSAVPFLITVVV). The Extracellular portion of the chain corresponds to 377 to 381 (LDSNL). A helical transmembrane segment spans residues 382–404 (VVTYIVAVAAGISVAAAFLLPWS). The Cytoplasmic segment spans residues 405 to 427 (MLPDVIDDFKLQHPESRGHEAIF). The chain crosses the membrane as a helical span at residues 428 to 450 (FSFYVFFTKFTSGVSLGISTLSL). Residues 451 to 467 (DFAGYQTRGCSQPSEVN) are Extracellular-facing. Residues 468 to 490 (ITLKLLVSAVPVGLILLGLLLFK) form a helical membrane-spanning segment. The Cytoplasmic portion of the chain corresponds to 491–528 (LYPIDEEKRRENKKALQDLREESNSSSESDSTELANIV). Residues 503-513 (KKALQDLREES) show a composition bias toward basic and acidic residues. Residues 503-528 (KKALQDLREESNSSSESDSTELANIV) form a disordered region. A compositionally biased stretch (low complexity) spans 514–528 (NSSSESDSTELANIV).

It belongs to the major facilitator superfamily.

It localises to the cell membrane. Its subcellular location is the endoplasmic reticulum membrane. It catalyses the reaction a 1-acyl-sn-glycero-3-phosphocholine(in) + Na(+)(in) = a 1-acyl-sn-glycero-3-phosphocholine(out) + Na(+)(out). It carries out the reaction 1-(4Z,7Z,10Z,13Z,16Z,19Z-docosahexaenoyl)-sn-glycero-3-phosphocholine(in) + Na(+)(in) = 1-(4Z,7Z,10Z,13Z,16Z,19Z-docosahexaenoyl)-sn-glycero-3-phosphocholine(out) + Na(+)(out). The enzyme catalyses 1-(9Z-octadecenoyl)-sn-glycero-3-phosphocholine(in) + Na(+)(in) = 1-(9Z-octadecenoyl)-sn-glycero-3-phosphocholine(out) + Na(+)(out). The catalysed reaction is 1-hexadecanoyl-sn-glycero-3-phosphocholine(in) + Na(+)(in) = 1-hexadecanoyl-sn-glycero-3-phosphocholine(out) + Na(+)(out). It catalyses the reaction a 1-acyl-sn-glycero-3-phosphoethanolamine(in) + Na(+)(in) = a 1-acyl-sn-glycero-3-phosphoethanolamine(out) + Na(+)(out). Functionally, sodium-dependent lysophosphatidylcholine (LPC) symporter, which plays an essential role for blood-brain barrier formation and function. Specifically expressed in endothelium of the blood-brain barrier of micro-vessels and transports LPC into the brain. Transport of LPC is essential because it constitutes the major mechanism by which docosahexaenoic acid (DHA), an omega-3 fatty acid that is essential for normal brain growth and cognitive function, enters the brain. Transports LPC carrying long-chain fatty acids such LPC oleate and LPC palmitate with a minimum acyl chain length of 14 carbons. Does not transport docosahexaenoic acid in unesterified fatty acid. This is Sodium-dependent lysophosphatidylcholine symporter 1 from Gallus gallus (Chicken).